We begin with the raw amino-acid sequence, 1418 residues long: Protein ced-11 (1418 aa).

7 helical membrane passes run 617–637 (FPIF…IIPV), 755–775 (YWLS…SVVL), 782–802 (LWDT…CFVL), 818–838 (VFDV…KVFP), 856–876 (VVSA…YIPL), 898–918 (FLFM…AVVF), and 986–1006 (IVIE…FAFF).

It is found in the membrane. In terms of biological role, plays a major role in programmed cell death. In Caenorhabditis elegans, this protein is Protein ced-11 (ced-11).